The primary structure comprises 257 residues: Probable amino-acid ABC transporter ATP-binding protein HI_1078 (257 aa).

The 241-residue stretch at 4-244 (LKVSNIQKNF…PQHERTKQFL (241 aa)) folds into the ABC transporter domain. An ATP-binding site is contributed by 36–43 (GPSGSGKT).

The protein belongs to the ABC transporter superfamily.

The protein localises to the cell inner membrane. Its function is as follows. Probably part of a binding-protein-dependent transport system for an amino acid. Probably responsible for energy coupling to the transport system. In Haemophilus influenzae (strain ATCC 51907 / DSM 11121 / KW20 / Rd), this protein is Probable amino-acid ABC transporter ATP-binding protein HI_1078.